The primary structure comprises 426 residues: Serine--tRNA ligase (426 aa).

233–235 (TAE) is an L-serine binding site. Residue 264 to 266 (RSE) participates in ATP binding. Residue Glu287 participates in L-serine binding. An ATP-binding site is contributed by 351-354 (EISS). Residue Ser387 participates in L-serine binding.

Belongs to the class-II aminoacyl-tRNA synthetase family. Type-1 seryl-tRNA synthetase subfamily. Homodimer. The tRNA molecule binds across the dimer.

The protein localises to the cytoplasm. The catalysed reaction is tRNA(Ser) + L-serine + ATP = L-seryl-tRNA(Ser) + AMP + diphosphate + H(+). The enzyme catalyses tRNA(Sec) + L-serine + ATP = L-seryl-tRNA(Sec) + AMP + diphosphate + H(+). Its pathway is aminoacyl-tRNA biosynthesis; selenocysteinyl-tRNA(Sec) biosynthesis; L-seryl-tRNA(Sec) from L-serine and tRNA(Sec): step 1/1. Functionally, catalyzes the attachment of serine to tRNA(Ser). Is also able to aminoacylate tRNA(Sec) with serine, to form the misacylated tRNA L-seryl-tRNA(Sec), which will be further converted into selenocysteinyl-tRNA(Sec). The chain is Serine--tRNA ligase from Stutzerimonas stutzeri (strain A1501) (Pseudomonas stutzeri).